The following is a 476-amino-acid chain: Glycogen synthase (476 aa).

K15 contacts ADP-alpha-D-glucose.

This sequence belongs to the glycosyltransferase 1 family. Bacterial/plant glycogen synthase subfamily.

It catalyses the reaction [(1-&gt;4)-alpha-D-glucosyl](n) + ADP-alpha-D-glucose = [(1-&gt;4)-alpha-D-glucosyl](n+1) + ADP + H(+). It functions in the pathway glycan biosynthesis; glycogen biosynthesis. In terms of biological role, synthesizes alpha-1,4-glucan chains using ADP-glucose. The sequence is that of Glycogen synthase from Bacillus cereus (strain ATCC 14579 / DSM 31 / CCUG 7414 / JCM 2152 / NBRC 15305 / NCIMB 9373 / NCTC 2599 / NRRL B-3711).